Consider the following 159-residue polypeptide: Transcription elongation factor GreA (159 aa).

It belongs to the GreA/GreB family.

Necessary for efficient RNA polymerase transcription elongation past template-encoded arresting sites. The arresting sites in DNA have the property of trapping a certain fraction of elongating RNA polymerases that pass through, resulting in locked ternary complexes. Cleavage of the nascent transcript by cleavage factors such as GreA or GreB allows the resumption of elongation from the new 3'terminus. GreA releases sequences of 2 to 3 nucleotides. The protein is Transcription elongation factor GreA of Buchnera aphidicola subsp. Acyrthosiphon pisum (strain APS) (Acyrthosiphon pisum symbiotic bacterium).